The following is a 321-amino-acid chain: Peptide transport system permease protein SapB (321 aa).

Topologically, residues 1–8 (MIIFTLRR) are cytoplasmic. The chain crosses the membrane as a helical span at residues 9 to 29 (LLLLLVTLFFLTFIGFSLSYF). Topologically, residues 30-80 (TPHAPLQGASLWNAWVFWFNGLLHWDFGVSSINGQLISEQLKEVFPATMEL) are periplasmic. The 229-residue stretch at 74 to 302 (FPATMELCIL…SLVIVVNVIS (229 aa)) folds into the ABC transmembrane type-1 domain. A helical membrane pass occupies residues 81–101 (CILAFGFALMVGIPVGMLAGV). At 102 to 113 (TRSKWPDRFISA) the chain is on the cytoplasmic side. The chain crosses the membrane as a helical span at residues 114-134 (LALLGFSIPVFWLALLLTLFF). The Periplasmic segment spans residues 135-174 (SLTLGWLPVSGRFDLLYEVKPVTGFAIIDAWISDSPWRDE). The helical transmembrane segment at 175–195 (MVMSAIRHMVLPVLTLSVAPT) threads the bilayer. The Cytoplasmic segment spans residues 196–248 (TEVIRLMRISTIEVYDQNYVKAAATRGLSRFTILRRHVLHNALPPVIPRLGLQ). The chain crosses the membrane as a helical span at residues 249–269 (FSTMLTLAMITEMVFSWPGLG). The Periplasmic portion of the chain corresponds to 270–280 (RWLIHAIRQQD). Residues 281–301 (YAAISAGVMVIGSLVIVVNVI) form a helical membrane-spanning segment. At 302 to 321 (SDILGAMANPLKHKEWYALR) the chain is on the cytoplasmic side.

The protein belongs to the binding-protein-dependent transport system permease family. OppBC subfamily.

It localises to the cell inner membrane. Its function is as follows. Involved in a peptide intake transport system that plays a role in the resistance to antimicrobial peptides. This chain is Peptide transport system permease protein SapB, found in Salmonella typhimurium (strain LT2 / SGSC1412 / ATCC 700720).